Consider the following 160-residue polypeptide: Small ribosomal subunit protein uS7 (160 aa).

Belongs to the universal ribosomal protein uS7 family. Part of the 30S ribosomal subunit. Contacts proteins S9 and S11.

In terms of biological role, one of the primary rRNA binding proteins, it binds directly to 16S rRNA where it nucleates assembly of the head domain of the 30S subunit. Is located at the subunit interface close to the decoding center, probably blocks exit of the E-site tRNA. This Anaplasma marginale (strain Florida) protein is Small ribosomal subunit protein uS7.